The sequence spans 522 residues: Cytochrome P450 1A3 (522 aa).

F229 provides a ligand contact to substrate. A heme-binding site is contributed by C463.

Belongs to the cytochrome P450 family. Requires heme as cofactor. As to expression, liver.

It is found in the endoplasmic reticulum membrane. It localises to the microsome membrane. The catalysed reaction is an organic molecule + reduced [NADPH--hemoprotein reductase] + O2 = an alcohol + oxidized [NADPH--hemoprotein reductase] + H2O + H(+). Cytochromes P450 are a group of heme-thiolate monooxygenases. They oxidize a variety of structurally unrelated compounds, including steroids, fatty acids, and xenobiotics. This Oncorhynchus mykiss (Rainbow trout) protein is Cytochrome P450 1A3 (cyp1a3).